Consider the following 105-residue polypeptide: Large ribosomal subunit protein uL24 (105 aa).

This sequence belongs to the universal ribosomal protein uL24 family. As to quaternary structure, part of the 50S ribosomal subunit.

One of two assembly initiator proteins, it binds directly to the 5'-end of the 23S rRNA, where it nucleates assembly of the 50S subunit. In terms of biological role, one of the proteins that surrounds the polypeptide exit tunnel on the outside of the subunit. The sequence is that of Large ribosomal subunit protein uL24 from Acinetobacter baumannii (strain AB307-0294).